Here is a 545-residue protein sequence, read N- to C-terminus: ATP synthase subunit alpha (545 aa).

174–181 (GDRKTGKT) contacts ATP.

This sequence belongs to the ATPase alpha/beta chains family. As to quaternary structure, F-type ATPases have 2 components, CF(1) - the catalytic core - and CF(0) - the membrane proton channel. CF(1) has five subunits: alpha(3), beta(3), gamma(1), delta(1), epsilon(1). CF(0) has three main subunits: a(1), b(2) and c(9-12). The alpha and beta chains form an alternating ring which encloses part of the gamma chain. CF(1) is attached to CF(0) by a central stalk formed by the gamma and epsilon chains, while a peripheral stalk is formed by the delta and b chains.

Its subcellular location is the cell membrane. The enzyme catalyses ATP + H2O + 4 H(+)(in) = ADP + phosphate + 5 H(+)(out). Functionally, produces ATP from ADP in the presence of a proton gradient across the membrane. The alpha chain is a regulatory subunit. The protein is ATP synthase subunit alpha of Cutibacterium acnes (strain DSM 16379 / KPA171202) (Propionibacterium acnes).